A 435-amino-acid chain; its full sequence is 3-ketoacyl-CoA thiolase (435 aa).

C98 (acyl-thioester intermediate) is an active-site residue. Catalysis depends on proton acceptor residues H391 and C421.

The protein belongs to the thiolase-like superfamily. Thiolase family. As to quaternary structure, heterotetramer of two alpha chains (FadJ) and two beta chains (FadI).

Its subcellular location is the cytoplasm. It catalyses the reaction an acyl-CoA + acetyl-CoA = a 3-oxoacyl-CoA + CoA. Its pathway is lipid metabolism; fatty acid beta-oxidation. Catalyzes the final step of fatty acid oxidation in which acetyl-CoA is released and the CoA ester of a fatty acid two carbons shorter is formed. The chain is 3-ketoacyl-CoA thiolase from Vibrio cholerae serotype O1 (strain ATCC 39541 / Classical Ogawa 395 / O395).